We begin with the raw amino-acid sequence, 141 residues long: Large ribosomal subunit protein uL11 (141 aa).

The protein belongs to the universal ribosomal protein uL11 family. Part of the ribosomal stalk of the 50S ribosomal subunit. Interacts with L10 and the large rRNA to form the base of the stalk. L10 forms an elongated spine to which L12 dimers bind in a sequential fashion forming a multimeric L10(L12)X complex. Post-translationally, one or more lysine residues are methylated.

Functionally, forms part of the ribosomal stalk which helps the ribosome interact with GTP-bound translation factors. The chain is Large ribosomal subunit protein uL11 from Wolinella succinogenes (strain ATCC 29543 / DSM 1740 / CCUG 13145 / JCM 31913 / LMG 7466 / NCTC 11488 / FDC 602W) (Vibrio succinogenes).